Here is a 398-residue protein sequence, read N- to C-terminus: Acetate kinase (398 aa).

Asn7 is a binding site for Mg(2+). Residue Lys14 coordinates ATP. Substrate is bound at residue Arg91. Residue Asp148 is the Proton donor/acceptor of the active site. Residues 208 to 212 (HIGNG), 283 to 285 (DMR), and 331 to 335 (GVGEN) contribute to the ATP site. A Mg(2+)-binding site is contributed by Glu384.

It belongs to the acetokinase family. As to quaternary structure, homodimer. It depends on Mg(2+) as a cofactor. Mn(2+) serves as cofactor.

It localises to the cytoplasm. It carries out the reaction acetate + ATP = acetyl phosphate + ADP. Its pathway is metabolic intermediate biosynthesis; acetyl-CoA biosynthesis; acetyl-CoA from acetate: step 1/2. Catalyzes the formation of acetyl phosphate from acetate and ATP. Can also catalyze the reverse reaction. The chain is Acetate kinase from Phocaeicola vulgatus (strain ATCC 8482 / DSM 1447 / JCM 5826 / CCUG 4940 / NBRC 14291 / NCTC 11154) (Bacteroides vulgatus).